The following is a 277-amino-acid chain: Carbonyl reductase [NADPH] 3 (277 aa).

S2 is modified (N-acetylserine). Residues 10-34, 38-42, 63-64, and N90 each bind NADP(+); these read VTGANKGIGFAITRDLCRKFSGDVV, RDEAR, and DI. Residue S30 is modified to Phosphoserine. Residue S140 coordinates substrate. The active-site Proton acceptor is the Y194. Position 194–198 (194–198) interacts with NADP(+); the sequence is YGVSK.

The protein belongs to the short-chain dehydrogenases/reductases (SDR) family.

The protein localises to the cytoplasm. The catalysed reaction is a secondary alcohol + NADP(+) = a ketone + NADPH + H(+). It carries out the reaction a quinone + NADPH + H(+) = a quinol + NADP(+). In terms of biological role, catalyzes the NADPH-dependent reduction of carbonyl compounds to their corresponding alcohols. Has low NADPH-dependent oxidoreductase activity. Acts on several orthoquinones, as well as on non-quinone compounds, such as isatin or on the anticancer drug oracin. Best substrates for CBR3 is 1,2- naphthoquinone, hence could play a role in protection against cytotoxicity of exogenous quinones. Exerts activity toward ortho-quinones but not paraquinones. No endogenous substrate for CBR3 except isatin has been identified. In Mus musculus (Mouse), this protein is Carbonyl reductase [NADPH] 3 (Cbr3).